The sequence spans 394 residues: Na(+)/H(+) antiporter NhaA (394 aa).

11 consecutive transmembrane segments (helical) span residues 11–31 (LEAA…IFAN), 59–79 (LLMW…GMEV), 95–115 (IFPA…YWFI), 125–145 (GWAI…ALLS), 155–175 (FLLA…ALFF), 177–197 (HEMS…LVAM), 203–220 (TGLI…ASVL), 254–274 (ALAP…NAGV), 296–316 (LIIG…LLGI), 328–348 (IFAI…IAGL), and 365–385 (LGIL…LKIT).

The protein belongs to the NhaA Na(+)/H(+) (TC 2.A.33) antiporter family.

Its subcellular location is the cell inner membrane. It carries out the reaction Na(+)(in) + 2 H(+)(out) = Na(+)(out) + 2 H(+)(in). Functionally, na(+)/H(+) antiporter that extrudes sodium in exchange for external protons. The protein is Na(+)/H(+) antiporter NhaA of Actinobacillus pleuropneumoniae serotype 7 (strain AP76).